Consider the following 416-residue polypeptide: UDP-N-acetylglucosamine 1-carboxyvinyltransferase (416 aa).

A phosphoenolpyruvate-binding site is contributed by 22-23 (KN). Arginine 91 provides a ligand contact to UDP-N-acetyl-alpha-D-glucosamine. Cysteine 115 functions as the Proton donor in the catalytic mechanism. Position 115 is a 2-(S-cysteinyl)pyruvic acid O-phosphothioketal (cysteine 115). UDP-N-acetyl-alpha-D-glucosamine is bound by residues 120-124 (RPIDL), aspartate 305, and isoleucine 327.

It belongs to the EPSP synthase family. MurA subfamily.

The protein localises to the cytoplasm. The enzyme catalyses phosphoenolpyruvate + UDP-N-acetyl-alpha-D-glucosamine = UDP-N-acetyl-3-O-(1-carboxyvinyl)-alpha-D-glucosamine + phosphate. It participates in cell wall biogenesis; peptidoglycan biosynthesis. Functionally, cell wall formation. Adds enolpyruvyl to UDP-N-acetylglucosamine. The protein is UDP-N-acetylglucosamine 1-carboxyvinyltransferase of Buchnera aphidicola subsp. Acyrthosiphon pisum (strain Tuc7).